The following is a 208-amino-acid chain: Thymidylate kinase (208 aa).

7–14 lines the ATP pocket; the sequence is GIDGAGKT.

The protein belongs to the thymidylate kinase family.

The enzyme catalyses dTMP + ATP = dTDP + ADP. Phosphorylation of dTMP to form dTDP in both de novo and salvage pathways of dTTP synthesis. In Xylella fastidiosa (strain Temecula1 / ATCC 700964), this protein is Thymidylate kinase.